A 357-amino-acid polypeptide reads, in one-letter code: Chorismate synthase (357 aa).

Position 46 (R46) interacts with NADP(+). Residues 123 to 125, 235 to 236, G275, 290 to 294, and R316 contribute to the FMN site; these read RSS, NA, and KPTPS.

The protein belongs to the chorismate synthase family. Homotetramer. The cofactor is FMNH2.

It carries out the reaction 5-O-(1-carboxyvinyl)-3-phosphoshikimate = chorismate + phosphate. It participates in metabolic intermediate biosynthesis; chorismate biosynthesis; chorismate from D-erythrose 4-phosphate and phosphoenolpyruvate: step 7/7. Its function is as follows. Catalyzes the anti-1,4-elimination of the C-3 phosphate and the C-6 proR hydrogen from 5-enolpyruvylshikimate-3-phosphate (EPSP) to yield chorismate, which is the branch point compound that serves as the starting substrate for the three terminal pathways of aromatic amino acid biosynthesis. This reaction introduces a second double bond into the aromatic ring system. The protein is Chorismate synthase of Sulfurovum sp. (strain NBC37-1).